We begin with the raw amino-acid sequence, 100 residues long: uncharacterized protein (100 aa).

This is an uncharacterized protein from Lactuca sativa (Garden lettuce).